We begin with the raw amino-acid sequence, 336 residues long: F420-dependent glucose-6-phosphate dehydrogenase (336 aa).

Aspartate 39 is a binding site for coenzyme F420-(gamma-Glu)n. Histidine 40 (proton donor) is an active-site residue. Coenzyme F420-(gamma-Glu)n is bound by residues threonine 76 and 107 to 108 (TG). Glutamate 109 acts as the Proton acceptor in catalysis. Coenzyme F420-(gamma-Glu)n is bound by residues asparagine 112, 177-178 (GG), and 180-181 (QV). Substrate is bound by residues threonine 195, lysine 198, lysine 259, and arginine 283.

It belongs to the F420-dependent glucose-6-phosphate dehydrogenase family. Homodimer.

The enzyme catalyses oxidized coenzyme F420-(gamma-L-Glu)(n) + D-glucose 6-phosphate + H(+) = 6-phospho-D-glucono-1,5-lactone + reduced coenzyme F420-(gamma-L-Glu)(n). Its function is as follows. Catalyzes the coenzyme F420-dependent oxidation of glucose 6-phosphate (G6P) to 6-phosphogluconolactone. Appears to have a role in resistance to oxidative stress, via its consumption of G6P that serves as a source of reducing power to combat oxidative stress in mycobacteria. This chain is F420-dependent glucose-6-phosphate dehydrogenase, found in Mycolicibacterium gilvum (strain PYR-GCK) (Mycobacterium gilvum (strain PYR-GCK)).